The primary structure comprises 201 residues: Recombination protein RecR (201 aa).

The segment at 60–75 adopts a C4-type zinc-finger fold; sequence CSTCGNVDTADPCMIC. Residues 83-178 enclose the Toprim domain; the sequence is GTIIVVEDVS…KVTRLAHGVP (96 aa).

The protein belongs to the RecR family.

In terms of biological role, may play a role in DNA repair. It seems to be involved in an RecBC-independent recombinational process of DNA repair. It may act with RecF and RecO. The chain is Recombination protein RecR from Mesorhizobium japonicum (strain LMG 29417 / CECT 9101 / MAFF 303099) (Mesorhizobium loti (strain MAFF 303099)).